The primary structure comprises 852 residues: DNA mismatch repair protein MutS (852 aa).

602–609 is an ATP binding site; the sequence is GPNMSGKS.

Belongs to the DNA mismatch repair MutS family.

In terms of biological role, this protein is involved in the repair of mismatches in DNA. It is possible that it carries out the mismatch recognition step. This protein has a weak ATPase activity. The polypeptide is DNA mismatch repair protein MutS (Streptococcus thermophilus (strain ATCC BAA-491 / LMD-9)).